The sequence spans 90 residues: Small ribosomal subunit protein bS18 (90 aa).

This sequence belongs to the bacterial ribosomal protein bS18 family. As to quaternary structure, part of the 30S ribosomal subunit. Forms a tight heterodimer with protein bS6.

Its function is as follows. Binds as a heterodimer with protein bS6 to the central domain of the 16S rRNA, where it helps stabilize the platform of the 30S subunit. This is Small ribosomal subunit protein bS18 from Bacteroides fragilis (strain YCH46).